The chain runs to 419 residues: UDP-N-acetylglucosamine 1-carboxyvinyltransferase (419 aa).

Phosphoenolpyruvate is bound at residue 22–23 (KN). A UDP-N-acetyl-alpha-D-glucosamine-binding site is contributed by Arg-91. Cys-115 functions as the Proton donor in the catalytic mechanism. At Cys-115 the chain carries 2-(S-cysteinyl)pyruvic acid O-phosphothioketal. UDP-N-acetyl-alpha-D-glucosamine contacts are provided by residues 120–124 (RPVDL), 160–163 (KVSV), Asp-305, and Val-327.

This sequence belongs to the EPSP synthase family. MurA subfamily.

The protein localises to the cytoplasm. The catalysed reaction is phosphoenolpyruvate + UDP-N-acetyl-alpha-D-glucosamine = UDP-N-acetyl-3-O-(1-carboxyvinyl)-alpha-D-glucosamine + phosphate. It participates in cell wall biogenesis; peptidoglycan biosynthesis. In terms of biological role, cell wall formation. Adds enolpyruvyl to UDP-N-acetylglucosamine. In Shigella dysenteriae serotype 1 (strain Sd197), this protein is UDP-N-acetylglucosamine 1-carboxyvinyltransferase.